The sequence spans 181 residues: Sodium/potassium-transporting ATPase subunit beta-1-interacting protein 3 (181 aa).

The next 4 helical transmembrane spans lie at 5–22 (TGRC…LVAL), 35–55 (APIL…FGTI), 62–82 (IVAY…IICF), and 151–171 (AVQI…ISVI).

Belongs to the NKAIN family. In terms of assembly, interacts with atp1b1 C-terminus.

Its subcellular location is the cell membrane. The chain is Sodium/potassium-transporting ATPase subunit beta-1-interacting protein 3 (nkain3) from Xenopus tropicalis (Western clawed frog).